Here is a 573-residue protein sequence, read N- to C-terminus: Dihydroxy-acid dehydratase (573 aa).

[2Fe-2S] cluster is bound at residue C62. D94 contacts Mg(2+). C135 contacts [2Fe-2S] cluster. Mg(2+)-binding residues include D136 and K137. K137 is subject to N6-carboxylysine. Residue C212 participates in [2Fe-2S] cluster binding. E463 provides a ligand contact to Mg(2+). Residue S489 is the Proton acceptor of the active site.

This sequence belongs to the IlvD/Edd family. Homodimer. Requires [2Fe-2S] cluster as cofactor. It depends on Mg(2+) as a cofactor.

It carries out the reaction (2R)-2,3-dihydroxy-3-methylbutanoate = 3-methyl-2-oxobutanoate + H2O. It catalyses the reaction (2R,3R)-2,3-dihydroxy-3-methylpentanoate = (S)-3-methyl-2-oxopentanoate + H2O. It participates in amino-acid biosynthesis; L-isoleucine biosynthesis; L-isoleucine from 2-oxobutanoate: step 3/4. The protein operates within amino-acid biosynthesis; L-valine biosynthesis; L-valine from pyruvate: step 3/4. Its function is as follows. Functions in the biosynthesis of branched-chain amino acids. Catalyzes the dehydration of (2R,3R)-2,3-dihydroxy-3-methylpentanoate (2,3-dihydroxy-3-methylvalerate) into 2-oxo-3-methylpentanoate (2-oxo-3-methylvalerate) and of (2R)-2,3-dihydroxy-3-methylbutanoate (2,3-dihydroxyisovalerate) into 2-oxo-3-methylbutanoate (2-oxoisovalerate), the penultimate precursor to L-isoleucine and L-valine, respectively. The polypeptide is Dihydroxy-acid dehydratase (Arthrobacter sp. (strain FB24)).